The chain runs to 208 residues: Holliday junction branch migration complex subunit RuvA (208 aa).

The domain I stretch occupies residues M1–A63. The domain II stretch occupies residues N64–Q142. The tract at residues G143–P147 is flexible linker. Residues V148–R208 are domain III.

It belongs to the RuvA family. As to quaternary structure, homotetramer. Forms an RuvA(8)-RuvB(12)-Holliday junction (HJ) complex. HJ DNA is sandwiched between 2 RuvA tetramers; dsDNA enters through RuvA and exits via RuvB. An RuvB hexamer assembles on each DNA strand where it exits the tetramer. Each RuvB hexamer is contacted by two RuvA subunits (via domain III) on 2 adjacent RuvB subunits; this complex drives branch migration. In the full resolvosome a probable DNA-RuvA(4)-RuvB(12)-RuvC(2) complex forms which resolves the HJ.

The protein resides in the cytoplasm. Functionally, the RuvA-RuvB-RuvC complex processes Holliday junction (HJ) DNA during genetic recombination and DNA repair, while the RuvA-RuvB complex plays an important role in the rescue of blocked DNA replication forks via replication fork reversal (RFR). RuvA specifically binds to HJ cruciform DNA, conferring on it an open structure. The RuvB hexamer acts as an ATP-dependent pump, pulling dsDNA into and through the RuvAB complex. HJ branch migration allows RuvC to scan DNA until it finds its consensus sequence, where it cleaves and resolves the cruciform DNA. The chain is Holliday junction branch migration complex subunit RuvA from Streptomyces griseus subsp. griseus (strain JCM 4626 / CBS 651.72 / NBRC 13350 / KCC S-0626 / ISP 5235).